Reading from the N-terminus, the 279-residue chain is NAD-dependent protein deacylase (279 aa).

Residues 20-272 (RERLRQRIFF…PEFVEKLLKG (253 aa)) enclose the Deacetylase sirtuin-type domain. 48–67 (GAGISAESGIRTFRAADGLW) is an NAD(+) binding site. Positions 92 and 95 each coordinate substrate. Position 129–132 (129–132 (QNID)) interacts with NAD(+). H147 (proton acceptor) is an active-site residue. Zn(2+) contacts are provided by C155 and C174. NAD(+) is bound by residues 214 to 216 (GTS), 240 to 242 (NLE), and A258.

This sequence belongs to the sirtuin family. Class III subfamily. Forms a 1:1 complex with acetyl-CoA synthetase (Acs). Zn(2+) serves as cofactor.

The protein localises to the cytoplasm. It catalyses the reaction N(6)-acetyl-L-lysyl-[protein] + NAD(+) + H2O = 2''-O-acetyl-ADP-D-ribose + nicotinamide + L-lysyl-[protein]. It carries out the reaction N(6)-succinyl-L-lysyl-[protein] + NAD(+) + H2O = 2''-O-succinyl-ADP-D-ribose + nicotinamide + L-lysyl-[protein]. The catalysed reaction is N(6)-(2-hydroxyisobutanoyl)-L-lysyl-[protein] + NAD(+) + H2O = 2''-O-(2-hydroxyisobutanoyl)-ADP-D-ribose + nicotinamide + L-lysyl-[protein]. With respect to regulation, deacetylation is inhibited by nicotinamide. Functionally, NAD-dependent lysine deacetylase that specifically removes acetyl groups on target proteins. Also acts as a protein-lysine deacylase by mediating protein desuccinylation and de-2-hydroxyisobutyrylation. Modulates the activities of several proteins which are inactive in their acylated form. Activates the enzyme acetyl-CoA synthetase (acs) by deacetylating 'Lys-609' in the inactive, acetylated form of the enzyme. May also modulate the activity of other propionyl-adenosine monophosphate (AMP)-forming enzymes. The chain is NAD-dependent protein deacylase from Escherichia coli (strain K12).